Consider the following 593-residue polypeptide: V-type ATP synthase alpha chain (593 aa).

246 to 253 (GPFGAGKT) provides a ligand contact to ATP.

The protein belongs to the ATPase alpha/beta chains family.

It catalyses the reaction ATP + H2O + 4 H(+)(in) = ADP + phosphate + 5 H(+)(out). Its function is as follows. Produces ATP from ADP in the presence of a proton gradient across the membrane. The V-type alpha chain is a catalytic subunit. This Protochlamydia amoebophila (strain UWE25) protein is V-type ATP synthase alpha chain.